The primary structure comprises 274 residues: 2,3,4,5-tetrahydropyridine-2,6-dicarboxylate N-succinyltransferase (274 aa).

Belongs to the transferase hexapeptide repeat family.

Its subcellular location is the cytoplasm. The catalysed reaction is (S)-2,3,4,5-tetrahydrodipicolinate + succinyl-CoA + H2O = (S)-2-succinylamino-6-oxoheptanedioate + CoA. It participates in amino-acid biosynthesis; L-lysine biosynthesis via DAP pathway; LL-2,6-diaminopimelate from (S)-tetrahydrodipicolinate (succinylase route): step 1/3. The sequence is that of 2,3,4,5-tetrahydropyridine-2,6-dicarboxylate N-succinyltransferase from Yersinia pseudotuberculosis serotype IB (strain PB1/+).